The primary structure comprises 659 residues: tRNA uridine 5-carboxymethylaminomethyl modification enzyme MnmG (659 aa).

13 to 18 contacts FAD; sequence GGGHAG. 281–295 contributes to the NAD(+) binding site; sequence GPRYCPSVEDKINRF.

It belongs to the MnmG family. Homodimer. Heterotetramer of two MnmE and two MnmG subunits. FAD serves as cofactor.

It localises to the cytoplasm. In terms of biological role, NAD-binding protein involved in the addition of a carboxymethylaminomethyl (cmnm) group at the wobble position (U34) of certain tRNAs, forming tRNA-cmnm(5)s(2)U34. In Delftia acidovorans (strain DSM 14801 / SPH-1), this protein is tRNA uridine 5-carboxymethylaminomethyl modification enzyme MnmG.